Consider the following 317-residue polypeptide: Acetyl-coenzyme A carboxylase carboxyl transferase subunit alpha (317 aa).

The CoA carboxyltransferase C-terminal domain occupies 37–292; the sequence is QISQKLEDTK…EEYILKAFNE (256 aa).

The protein belongs to the AccA family. In terms of assembly, acetyl-CoA carboxylase is a heterohexamer composed of biotin carboxyl carrier protein (AccB), biotin carboxylase (AccC) and two subunits each of ACCase subunit alpha (AccA) and ACCase subunit beta (AccD).

It localises to the cytoplasm. The catalysed reaction is N(6)-carboxybiotinyl-L-lysyl-[protein] + acetyl-CoA = N(6)-biotinyl-L-lysyl-[protein] + malonyl-CoA. It functions in the pathway lipid metabolism; malonyl-CoA biosynthesis; malonyl-CoA from acetyl-CoA: step 1/1. Its function is as follows. Component of the acetyl coenzyme A carboxylase (ACC) complex. First, biotin carboxylase catalyzes the carboxylation of biotin on its carrier protein (BCCP) and then the CO(2) group is transferred by the carboxyltransferase to acetyl-CoA to form malonyl-CoA. The chain is Acetyl-coenzyme A carboxylase carboxyl transferase subunit alpha from Flavobacterium psychrophilum (strain ATCC 49511 / DSM 21280 / CIP 103535 / JIP02/86).